A 202-amino-acid chain; its full sequence is Orotate phosphoribosyltransferase (202 aa).

Residues arginine 94, lysine 98, histidine 100, and 120-128 contribute to the 5-phospho-alpha-D-ribose 1-diphosphate site; that span reads EDLISTGGS. Orotate is bound at residue serine 124.

The protein belongs to the purine/pyrimidine phosphoribosyltransferase family. PyrE subfamily. In terms of assembly, homodimer. It depends on Mg(2+) as a cofactor.

The enzyme catalyses orotidine 5'-phosphate + diphosphate = orotate + 5-phospho-alpha-D-ribose 1-diphosphate. The protein operates within pyrimidine metabolism; UMP biosynthesis via de novo pathway; UMP from orotate: step 1/2. Its function is as follows. Catalyzes the transfer of a ribosyl phosphate group from 5-phosphoribose 1-diphosphate to orotate, leading to the formation of orotidine monophosphate (OMP). In Oceanobacillus iheyensis (strain DSM 14371 / CIP 107618 / JCM 11309 / KCTC 3954 / HTE831), this protein is Orotate phosphoribosyltransferase.